Consider the following 314-residue polypeptide: Olfactory receptor 52H1 (314 aa).

Topologically, residues 1–32 (MIIFNLSSYNPGPFILVGIPGLEQFHVWIGIP) are extracellular. Asn5 carries N-linked (GlcNAc...) asparagine glycosylation. The helical transmembrane segment at 33–53 (FCIIYIVAVVGNCILLYLIVV) threads the bilayer. Topologically, residues 54–59 (EHSLHE) are cytoplasmic. The chain crosses the membrane as a helical span at residues 60-80 (PMFFFLSMLAMTDLILSTAGV). Residues 81-101 (PKALSIFWLGAREITFPGCLT) are Extracellular-facing. An intrachain disulfide couples Cys99 to Cys181. Residues 102–122 (QMFFLHYNFVLDSAILMAMAF) form a helical membrane-spanning segment. The Cytoplasmic portion of the chain corresponds to 123-149 (DHYVAICSPLRYTTILTPKTIIKSAMG). A helical transmembrane segment spans residues 150-170 (ISFRSFCIILPDVFLLTCLPF). Residues 171–197 (CRTRIIPHTYCEHIGVAQLACADISIN) lie on the Extracellular side of the membrane. The helical transmembrane segment at 198–218 (FWYGFCVPIMTVISDVILIAV) threads the bilayer. Residues 219-242 (SYAHILCAVFGLPSQDACQKALGT) are Cytoplasmic-facing. A helical transmembrane segment spans residues 243-263 (CGSHVCVILMFYTPAFFSILA). Over 264-275 (HRFGHNVSRTFH) the chain is Extracellular. Asn269 carries N-linked (GlcNAc...) asparagine glycosylation. Residues 276 to 296 (IMFANLYIVIPPALNPMVYGV) traverse the membrane as a helical segment. Residues 297–314 (KTKQIRDKVILLFSKGTG) lie on the Cytoplasmic side of the membrane.

Belongs to the G-protein coupled receptor 1 family.

The protein resides in the membrane. Its function is as follows. Odorant receptor. The sequence is that of Olfactory receptor 52H1 (OR52H1) from Homo sapiens (Human).